The chain runs to 471 residues: ATP synthase subunit beta (471 aa).

153-160 (GGAGVGKT) is an ATP binding site.

The protein belongs to the ATPase alpha/beta chains family. As to quaternary structure, F-type ATPases have 2 components, CF(1) - the catalytic core - and CF(0) - the membrane proton channel. CF(1) has five subunits: alpha(3), beta(3), gamma(1), delta(1), epsilon(1). CF(0) has four main subunits: a(1), b(1), b'(1) and c(9-12).

The protein resides in the cell membrane. It carries out the reaction ATP + H2O + 4 H(+)(in) = ADP + phosphate + 5 H(+)(out). In terms of biological role, produces ATP from ADP in the presence of a proton gradient across the membrane. The catalytic sites are hosted primarily by the beta subunits. In Chloroflexus aggregans (strain MD-66 / DSM 9485), this protein is ATP synthase subunit beta.